Reading from the N-terminus, the 258-residue chain is Neurotrophin-3 (258 aa).

The signal sequence occupies residues 1–18 (MSILFYVIFLAYLRGIQG). The propeptide occupies 19 to 139 (NNMDQRSLPE…TNRTSPRRKR (121 aa)). Residues 60–85 (QSTLPKAEAPREPEQGEATRSEFQPM) are disordered. The span at 67–79 (EAPREPEQGEATR) shows a compositional bias: basic and acidic residues. An N-linked (GlcNAc...) asparagine glycan is attached at Asn131. 3 disulfides stabilise this stretch: Cys153-Cys218, Cys196-Cys247, and Cys206-Cys249.

It belongs to the NGF-beta family. In terms of tissue distribution, brain and peripheral tissues.

It is found in the secreted. Functionally, seems to promote the survival of visceral and proprioceptive sensory neurons. The sequence is that of Neurotrophin-3 (Ntf3) from Rattus norvegicus (Rat).